The following is a 211-amino-acid chain: Troponin I, cardiac muscle (211 aa).

The tract at residues 1-25 (MADESSDAAGEPQPAPAPVRRRSSA) is disordered. A2 is subject to N-acetylalanine. Residues S5 and S6 each carry the phosphoserine modification. S23 and S24 each carry phosphoserine; by PKA and PKD/PRKD1. Position 27 is a phosphotyrosine (Y27). T32 is subject to Phosphothreonine; by STK4/MST1. The tract at residues 33–80 (EPHAKKKSKISASRKLQLKTLMLQIAKQEMEREAEERRGEKGRVLSTR) is involved in binding TNC. Phosphoserine; by PKC/PRKCE occurs at positions 43 and 45. T52 carries the post-translational modification Phosphothreonine; by STK4/MST1. Phosphoserine is present on S78. At T79 the chain carries Phosphothreonine. 2 positions are modified to phosphothreonine; by STK4/MST1: T130 and T144. The involved in binding TNC and actin stretch occupies residues 130–151 (TQKIYDLRGKFKRPTLRRVRIS). The residue at position 151 (S151) is a Phosphoserine; by PAK3. Phosphoserine occurs at positions 167 and 200.

This sequence belongs to the troponin I family. As to quaternary structure, interacts with TRIM63. Binds to actin and tropomyosin. Interacts with STK4/MST1. In terms of processing, phosphorylated at Ser-23 and Ser-24 by PRKD1; phosphorylation reduces myofilament calcium sensitivity. Phosphorylated preferentially at Thr-32. Phosphorylation by STK4/MST1 alters its binding affinity to TNNC1 (cardiac Tn-C) and TNNT2 (cardiac Tn-T). Phosphorylated at Ser-43 and Ser-45 by PRKCE; phosphorylation increases myocardium contractile dysfunction.

Troponin I is the inhibitory subunit of troponin, the thin filament regulatory complex which confers calcium-sensitivity to striated muscle actomyosin ATPase activity. In Rattus norvegicus (Rat), this protein is Troponin I, cardiac muscle (Tnni3).